Here is a 229-residue protein sequence, read N- to C-terminus: Urease accessory protein UreG (229 aa).

Residues 1-15 are compositionally biased toward basic and acidic residues; sequence MPPHFIDGEPHDHQH. Positions 1-20 are disordered; that stretch reads MPPHFIDGEPHDHQHDRPRR. 34-41 is a binding site for GTP; it reads GPVGSGKT.

The protein belongs to the SIMIBI class G3E GTPase family. UreG subfamily. Homodimer. UreD, UreF and UreG form a complex that acts as a GTP-hydrolysis-dependent molecular chaperone, activating the urease apoprotein by helping to assemble the nickel containing metallocenter of UreC. The UreE protein probably delivers the nickel.

Its subcellular location is the cytoplasm. Its function is as follows. Facilitates the functional incorporation of the urease nickel metallocenter. This process requires GTP hydrolysis, probably effectuated by UreG. The chain is Urease accessory protein UreG from Rhodococcus jostii (strain RHA1).